A 666-amino-acid polypeptide reads, in one-letter code: tRNA 5-methylaminomethyl-2-thiouridine biosynthesis bifunctional protein MnmC (666 aa).

The tRNA (mnm(5)s(2)U34)-methyltransferase stretch occupies residues 1-253 (MSSPFAPIIT…KRHMLCAYYE (253 aa)). Residues 283-666 (VGGGLAGCFI…FLRKKIIQGP (384 aa)) are FAD-dependent cmnm(5)s(2)U34 oxidoreductase.

It in the N-terminal section; belongs to the methyltransferase superfamily. tRNA (mnm(5)s(2)U34)-methyltransferase family. This sequence in the C-terminal section; belongs to the DAO family. It depends on FAD as a cofactor.

It is found in the cytoplasm. The catalysed reaction is 5-aminomethyl-2-thiouridine(34) in tRNA + S-adenosyl-L-methionine = 5-methylaminomethyl-2-thiouridine(34) in tRNA + S-adenosyl-L-homocysteine + H(+). In terms of biological role, catalyzes the last two steps in the biosynthesis of 5-methylaminomethyl-2-thiouridine (mnm(5)s(2)U) at the wobble position (U34) in tRNA. Catalyzes the FAD-dependent demodification of cmnm(5)s(2)U34 to nm(5)s(2)U34, followed by the transfer of a methyl group from S-adenosyl-L-methionine to nm(5)s(2)U34, to form mnm(5)s(2)U34. This chain is tRNA 5-methylaminomethyl-2-thiouridine biosynthesis bifunctional protein MnmC, found in Legionella pneumophila (strain Corby).